A 406-amino-acid polypeptide reads, in one-letter code: MTLDVGPEDELPDWAAAKEFYQKYDPKDIIGRGVSSVVRRCVHRATGDEFAVKIMEVSAERLSLEQLEEVRDATRREMHILRQVAGHPHIITLIDSYESSSFMFLVFDLMRKGELFDYLTEKVALSEKETRSIMRSLLEAVNFLHVNNIVHRDLKPENILLDDNMQIRLSDFGFSCHLEPGEKLRELCGTPGYLAPEILKCSMDETHPGYGKEVDLWACGVILFTLLAGSPPFWHRRQILMLRMIMEGQYQFSSPEWDDRSNTVKDLIAKLLQVDPNARLTAEQALQHPFFERCKGSQPWNLTPRQRFRVAVWTILAAGRVALSSHRLRPLTKNALLRDPYALRPVRRLIDNCAFRLYGHWVKKGEQQNRAALFQHQPPRPFPIIATDLEGDSSAITEDEVTLVRS.

Positions 24–291 (YDPKDIIGRG…AEQALQHPFF (268 aa)) constitute a Protein kinase domain. Residues 30 to 38 (IGRGVSSVV) and Lys-53 each bind ATP. Asp-153 (proton acceptor) is an active-site residue. The tract at residues 306–330 (QRFRVAVWTILAAGRVALSSHRLRP) is calmodulin-binding (domain-N). Positions 346 to 370 (VRRLIDNCAFRLYGHWVKKGEQQNR) are calmodulin-binding (domain-C).

It belongs to the protein kinase superfamily. CAMK Ser/Thr protein kinase family. As to quaternary structure, hexadecamer of 4 heterotetramers, each composed of alpha, beta, gamma, and delta subunits. Alpha (PHKA1 or PHKA2) and beta (PHKB) are regulatory subunits, gamma (PHKG1 or PHKG2) is the catalytic subunit, and delta is calmodulin.

The catalysed reaction is 2 ATP + phosphorylase b = 2 ADP + phosphorylase a.. In terms of biological role, catalytic subunit of the phosphorylase b kinase (PHK), which mediates the neural and hormonal regulation of glycogen breakdown (glycogenolysis) by phosphorylating and thereby activating glycogen phosphorylase. May regulate glycogeneolysis in the testis. In vitro, phosphorylates PYGM. This chain is Phosphorylase b kinase gamma catalytic chain, liver/testis isoform (Phkg2), found in Rattus norvegicus (Rat).